A 159-amino-acid polypeptide reads, in one-letter code: Phosphopantetheine adenylyltransferase (159 aa).

Ser9 contacts substrate. Residues Ser9–Phe10 and His17 each bind ATP. Lys41, Leu74, and Lys88 together coordinate substrate. ATP contacts are provided by residues Gly89–Arg91, Glu99, and Tyr123–Thr129.

Belongs to the bacterial CoaD family. Homohexamer. The cofactor is Mg(2+).

It is found in the cytoplasm. The catalysed reaction is (R)-4'-phosphopantetheine + ATP + H(+) = 3'-dephospho-CoA + diphosphate. Its pathway is cofactor biosynthesis; coenzyme A biosynthesis; CoA from (R)-pantothenate: step 4/5. Reversibly transfers an adenylyl group from ATP to 4'-phosphopantetheine, yielding dephospho-CoA (dPCoA) and pyrophosphate. This is Phosphopantetheine adenylyltransferase from Arthrobacter sp. (strain FB24).